A 168-amino-acid polypeptide reads, in one-letter code: Nicotinamide-nucleotide adenylyltransferase (168 aa).

It belongs to the archaeal NMN adenylyltransferase family.

The protein resides in the cytoplasm. It catalyses the reaction beta-nicotinamide D-ribonucleotide + ATP + H(+) = diphosphate + NAD(+). Its pathway is cofactor biosynthesis; NAD(+) biosynthesis; NAD(+) from nicotinamide D-ribonucleotide: step 1/1. The polypeptide is Nicotinamide-nucleotide adenylyltransferase (Methanoculleus marisnigri (strain ATCC 35101 / DSM 1498 / JR1)).